The following is a 93-amino-acid chain: Acylphosphatase (93 aa).

One can recognise an Acylphosphatase-like domain in the interval 7 to 93 (RAHVFVSGTV…EGIDGFHIRR (87 aa)). Active-site residues include R22 and N40.

The protein belongs to the acylphosphatase family.

It catalyses the reaction an acyl phosphate + H2O = a carboxylate + phosphate + H(+). In Haloquadratum walsbyi (strain DSM 16790 / HBSQ001), this protein is Acylphosphatase (acyP).